Reading from the N-terminus, the 374-residue chain is Carnitine monooxygenase oxygenase subunit (374 aa).

The 109-residue stretch at Trp47–Ile155 folds into the Rieske domain. [2Fe-2S] cluster is bound by residues Cys89, His91, Cys109, and His112. Fe cation-binding residues include His211, His216, and Asp325.

This sequence belongs to the bacterial ring-hydroxylating dioxygenase alpha subunit family. CntA subfamily. As to quaternary structure, composed of an oxygenase subunit and a reductase subunit. [2Fe-2S] cluster is required as a cofactor. It depends on Fe cation as a cofactor.

It carries out the reaction (R)-carnitine + NADH + O2 + H(+) = (3R)-3-hydroxy-4-oxobutanoate + trimethylamine + NAD(+) + H2O. The enzyme catalyses (R)-carnitine + NADPH + O2 + H(+) = (3R)-3-hydroxy-4-oxobutanoate + trimethylamine + NADP(+) + H2O. It functions in the pathway amine and polyamine metabolism; carnitine metabolism. Its function is as follows. Converts carnitine to trimethylamine and malic semialdehyde. This is Carnitine monooxygenase oxygenase subunit (yeaW) from Escherichia coli O157:H7.